The following is a 571-amino-acid chain: Pectinesterase/pectinesterase inhibitor (571 aa).

A pectinesterase inhibitor region spans residues 27–178 (NSHQKAVESL…KILSSNAIDI (152 aa)). A disordered region spans residues 233 to 254 (AQAGRPGAPADEGIGEGGGGGG). The tract at residues 259-558 (THVVAKDGSG…TVANWLTPAN (300 aa)) is pectinesterase. Substrate-binding residues include T336 and Q366. D389 (proton donor; for pectinesterase activity) is an active-site residue. D410 serves as the catalytic Nucleophile; for pectinesterase activity. R479 and W481 together coordinate substrate.

The protein in the N-terminal section; belongs to the PMEI family. In the C-terminal section; belongs to the pectinesterase family.

It localises to the secreted. The protein resides in the cell wall. The catalysed reaction is [(1-&gt;4)-alpha-D-galacturonosyl methyl ester](n) + n H2O = [(1-&gt;4)-alpha-D-galacturonosyl](n) + n methanol + n H(+). It participates in glycan metabolism; pectin degradation; 2-dehydro-3-deoxy-D-gluconate from pectin: step 1/5. Acts in the modification of cell walls via demethylesterification of cell wall pectin. The polypeptide is Pectinesterase/pectinesterase inhibitor (Brassica campestris (Field mustard)).